Reading from the N-terminus, the 121-residue chain is MSAESFNIVHIRENKLLARRELLVEAVHQNASTPTRQSVREWVAKQLGIDISNVFVRRIKTEFGRGRSLAEVHVYNDSKIARVIEPLYILARNLGEEGKKLLEEAKKRRNERREKKKRKKK.

Belongs to the eukaryotic ribosomal protein eS24 family.

This Pyrobaculum aerophilum (strain ATCC 51768 / DSM 7523 / JCM 9630 / CIP 104966 / NBRC 100827 / IM2) protein is Small ribosomal subunit protein eS24.